The chain runs to 66 residues: Large ribosomal subunit protein bL31 (66 aa).

Cys16, Cys18, Cys36, and Cys39 together coordinate Zn(2+).

The protein belongs to the bacterial ribosomal protein bL31 family. Type A subfamily. Part of the 50S ribosomal subunit. It depends on Zn(2+) as a cofactor.

Binds the 23S rRNA. The sequence is that of Large ribosomal subunit protein bL31 from Sulfurimonas denitrificans (strain ATCC 33889 / DSM 1251) (Thiomicrospira denitrificans (strain ATCC 33889 / DSM 1251)).